A 617-amino-acid polypeptide reads, in one-letter code: Electron transfer flavoprotein-ubiquinone oxidoreductase, mitochondrial (617 aa).

The N-terminal 33 residues, 1–33 (MMVPLAKLASPAYQCFHALKIKKNYLPLCATRW), are a transit peptide targeting the mitochondrion. 75–80 (GAGPAG) lines the FAD pocket. The residue at position 96 (K96) is an N6-acetyllysine. An intramembrane segment occupies 109–130 (IGAHTLSGACLDPRAFEELFPD). N6-acetyllysine is present on residues K132 and K223. A ubiquinone-binding residues include G305 and G306. Residue K357 is modified to N6-acetyllysine. The stretch at 428–447 (IGLHVTEYEDNLKNSWVWKE) is an intramembrane region. A Phosphoserine modification is found at S551. 4 residues coordinate [4Fe-4S] cluster: C561, C586, C589, and C592. The region spanning 577–606 (FRLQINAQNCVHCKTCDIKDPSQNINWVVP) is the 4Fe-4S ferredoxin-type domain.

In terms of assembly, monomer. Requires [4Fe-4S] cluster as cofactor. The cofactor is FAD.

The protein localises to the mitochondrion inner membrane. The enzyme catalyses a ubiquinone + reduced [electron-transfer flavoprotein] = a ubiquinol + oxidized [electron-transfer flavoprotein] + H(+). In terms of biological role, accepts electrons from ETF and reduces ubiquinone. This is Electron transfer flavoprotein-ubiquinone oxidoreductase, mitochondrial (ETFDH) from Sus scrofa (Pig).